A 371-amino-acid polypeptide reads, in one-letter code: Macronuclear solute carrier homolog CR-MSC (371 aa).

3 Solcar repeats span residues 16–111, 120–208, and 215–304; these read RMNY…FYDK, ARPD…CKEN, and PHWI…LSQF. The next 6 membrane-spanning stretches (helical) occupy residues 22 to 42, 89 to 109, 126 to 146, 184 to 204, 221 to 241, and 281 to 301; these read FAAANVIALITHAATQPLDMV, TFFFRTVGYTTARVTAFGYFY, VAAGVLGGFIAGVVTNPIDIV, AGANGFKLAAICSSMTNIYDW, LWGTAVAVAIGTVVSMPFDMI, and FGSFYAGGEAYFLRLFLICYL.

It belongs to the mitochondrial carrier (TC 2.A.29) family.

The protein resides in the membrane. In Oxytricha trifallax (Sterkiella histriomuscorum), this protein is Macronuclear solute carrier homolog CR-MSC.